Here is a 517-residue protein sequence, read N- to C-terminus: Crotonobetaine/carnitine--CoA ligase (517 aa).

The protein belongs to the ATP-dependent AMP-binding enzyme family.

The catalysed reaction is 4-(trimethylamino)butanoate + ATP + CoA = 4-(trimethylamino)butanoyl-CoA + AMP + diphosphate. The enzyme catalyses crotonobetaine + ATP + CoA = crotonobetainyl-CoA + AMP + diphosphate. It catalyses the reaction (R)-carnitine + ATP + CoA = (R)-carnitinyl-CoA + AMP + diphosphate. Its pathway is amine and polyamine metabolism; carnitine metabolism. Functionally, catalyzes the transfer of CoA to carnitine, generating the initial carnitinyl-CoA needed for the CaiB reaction cycle. Also has activity toward crotonobetaine and gamma-butyrobetaine. The sequence is that of Crotonobetaine/carnitine--CoA ligase from Salmonella arizonae (strain ATCC BAA-731 / CDC346-86 / RSK2980).